The primary structure comprises 1060 residues: Carbamoyl phosphate synthase large chain (1060 aa).

The interval M1 to E401 is carboxyphosphate synthetic domain. Residues R129, R169, G175, G176, R208, I210, E215, G241, I242, H243, Q284, and E298 each contribute to the ATP site. The ATP-grasp 1 domain maps to K133 to V327. Residues Q284, E298, and N300 each contribute to the Mg(2+) site. 3 residues coordinate Mn(2+): Q284, E298, and N300. The interval I402–S546 is oligomerization domain. A carbamoyl phosphate synthetic domain region spans residues L547–Y929. The ATP-grasp 2 domain maps to E671 to L861. R707, A746, L748, E752, G777, V778, H779, S780, Q820, and E832 together coordinate ATP. Q820, E832, and N834 together coordinate Mg(2+). Mn(2+) is bound by residues Q820, E832, and N834. Residues L930–D1060 enclose the MGS-like domain. Residues L930–D1060 are allosteric domain.

It belongs to the CarB family. In terms of assembly, composed of two chains; the small (or glutamine) chain promotes the hydrolysis of glutamine to ammonia, which is used by the large (or ammonia) chain to synthesize carbamoyl phosphate. Tetramer of heterodimers (alpha,beta)4. Requires Mg(2+) as cofactor. It depends on Mn(2+) as a cofactor.

The enzyme catalyses hydrogencarbonate + L-glutamine + 2 ATP + H2O = carbamoyl phosphate + L-glutamate + 2 ADP + phosphate + 2 H(+). It carries out the reaction hydrogencarbonate + NH4(+) + 2 ATP = carbamoyl phosphate + 2 ADP + phosphate + 2 H(+). The protein operates within amino-acid biosynthesis; L-arginine biosynthesis; carbamoyl phosphate from bicarbonate: step 1/1. Its pathway is pyrimidine metabolism; UMP biosynthesis via de novo pathway; (S)-dihydroorotate from bicarbonate: step 1/3. Its function is as follows. Large subunit of the glutamine-dependent carbamoyl phosphate synthetase (CPSase). CPSase catalyzes the formation of carbamoyl phosphate from the ammonia moiety of glutamine, carbonate, and phosphate donated by ATP, constituting the first step of 2 biosynthetic pathways, one leading to arginine and/or urea and the other to pyrimidine nucleotides. The large subunit (synthetase) binds the substrates ammonia (free or transferred from glutamine from the small subunit), hydrogencarbonate and ATP and carries out an ATP-coupled ligase reaction, activating hydrogencarbonate by forming carboxy phosphate which reacts with ammonia to form carbamoyl phosphate. The polypeptide is Carbamoyl phosphate synthase large chain (Streptococcus agalactiae serotype V (strain ATCC BAA-611 / 2603 V/R)).